The sequence spans 212 residues: Phosphoenolpyruvate guanylyltransferase (212 aa).

Phosphoenolpyruvate-binding residues include Thr139, Gly155, and Ser158.

This sequence belongs to the CofC family.

The catalysed reaction is phosphoenolpyruvate + GTP + H(+) = enolpyruvoyl-2-diphospho-5'-guanosine + diphosphate. It participates in cofactor biosynthesis; coenzyme F420 biosynthesis. Its function is as follows. Guanylyltransferase that catalyzes the activation of phosphoenolpyruvate (PEP) as enolpyruvoyl-2-diphospho-5'-guanosine, via the condensation of PEP with GTP. It is involved in the biosynthesis of coenzyme F420, a hydride carrier cofactor. This chain is Phosphoenolpyruvate guanylyltransferase, found in Streptomyces coelicolor (strain ATCC BAA-471 / A3(2) / M145).